The sequence spans 134 residues: Large ribosomal subunit protein eL32 (134 aa).

Belongs to the eukaryotic ribosomal protein eL32 family.

The protein is Large ribosomal subunit protein eL32 (RpL32) of Drosophila affinis (Fruit fly).